Here is a 461-residue protein sequence, read N- to C-terminus: Signal recognition particle receptor FtsY (461 aa).

Residues 105–138 (FESLYNVAKIYHQLEKPDKALEYAQRAEKLVPYE) form a TPR repeat. Residues 267-274 (GVNGSGKT), 349-353 (DTAGR), and 413-416 (TKLD) each bind GTP.

It belongs to the GTP-binding SRP family. FtsY subfamily. Part of the signal recognition particle protein translocation system, which is composed of SRP and FtsY.

Its subcellular location is the cell inner membrane. The protein resides in the cytoplasm. The enzyme catalyses GTP + H2O = GDP + phosphate + H(+). Its function is as follows. Involved in targeting and insertion of nascent membrane proteins into the cytoplasmic membrane. Acts as a receptor for the complex formed by the signal recognition particle (SRP) and the ribosome-nascent chain (RNC). In Aquifex aeolicus (strain VF5), this protein is Signal recognition particle receptor FtsY.